Reading from the N-terminus, the 180-residue chain is Pyruvoyl-dependent arginine decarboxylase (180 aa).

Ser41 bears the Pyruvic acid (Ser) mark.

The protein belongs to the PdaD family. Pyruvate is required as a cofactor.

The enzyme catalyses L-arginine + H(+) = agmatine + CO2. The sequence is that of Pyruvoyl-dependent arginine decarboxylase from Methanococcoides burtonii (strain DSM 6242 / NBRC 107633 / OCM 468 / ACE-M).